Reading from the N-terminus, the 284-residue chain is Pantothenate synthetase (284 aa).

ATP is bound at residue Met-30–His-37. His-37 functions as the Proton donor in the catalytic mechanism. Gln-61 is a (R)-pantoate binding site. Gln-61 contributes to the beta-alanine binding site. Position 147–150 (Gly-147–Asp-150) interacts with ATP. Gln-153 serves as a coordination point for (R)-pantoate. Residues Val-176 and Met-184–Arg-187 each bind ATP.

This sequence belongs to the pantothenate synthetase family. In terms of assembly, homodimer.

It localises to the cytoplasm. It carries out the reaction (R)-pantoate + beta-alanine + ATP = (R)-pantothenate + AMP + diphosphate + H(+). It functions in the pathway cofactor biosynthesis; (R)-pantothenate biosynthesis; (R)-pantothenate from (R)-pantoate and beta-alanine: step 1/1. Its function is as follows. Catalyzes the condensation of pantoate with beta-alanine in an ATP-dependent reaction via a pantoyl-adenylate intermediate. This chain is Pantothenate synthetase, found in Pelobacter propionicus (strain DSM 2379 / NBRC 103807 / OttBd1).